Consider the following 72-residue polypeptide: Delta-actitoxin-Avd2b 3 (72 aa).

The first 21 residues, methionine 1 to alanine 21, serve as a signal peptide directing secretion. Residues asparagine 22–glycine 42 constitute a propeptide that is removed on maturation. Intrachain disulfides connect cysteine 47–cysteine 62, cysteine 48–cysteine 56, and cysteine 50–cysteine 67.

Belongs to the sea anemone short toxin (type III) family.

It is found in the secreted. The protein resides in the nematocyst. Its function is as follows. Voltage-gated sodium channel (Nav) inhibitor. 1 uM completely inhibits insect voltage-gated sodium channel inactivation (DmNav1 from D.melanogaster). This is Delta-actitoxin-Avd2b 3 from Anemonia viridis (Snakelocks anemone).